We begin with the raw amino-acid sequence, 676 residues long: MSKLYDLVSDYAPSGDQPTAIKQLTEGLDAGLAHQTLLGVTGSGKTFTLANVIAQAQRPAILLAPNKTLAAQLYGEMKAFFPNNAVEYFVSYYDYYQPEAYVPTTDTFIEKDSSVNAHIEQMRLSATKALLERKDAIIVASVSAIYGLGDPEAYLQMMLHIRRGDVMDQRDILRRLAELQYSRNDIAFERGQFRVRGEVIDVFPAESDQDAVRIEMFDDEIDCISVFDPLTGVVKQRDLPRFTIYPKTHYVTPRERILQAIENIKQELRERQTYLRDNNKLLEEQRISQRTQFDIEMMNELGFCSGIENYSRYLSGRAEGEPPPTLFDYLPHDGLLIIDESHVTVPQIGAMYKGDRSRKETLVEYGFRLPSALDNRPLKFEEFEALAPQTIFVSATPGNYELEKSAGEIADQVVRPTGLLDPVLEVRPVATQVDDLLSEIRIRAVKDERVLVTTLTKRMAEDLTEYLHEHDVKVRYLHSDIDTVERVEIIRDLRLGEFDVLVGINLLREGLDMPEVSLVAILDADKEGFLRSERSLIQTIGRAARNLHGKAILYADSITKSMKKAMDETERRREKQQAYNEKMGIQPQALKRNIKDIMELGDITKSRKQKVSKTVPLSKVAEPSLSYNVLTPQQLEKEITKLEAQMYKHAQDLEFELAAQKRDEIEKLRQQFIANS.

Residues 26-414 (EGLDAGLAHQ…SAGEIADQVV (389 aa)) enclose the Helicase ATP-binding domain. 39–46 (GVTGSGKT) is a binding site for ATP. The Beta-hairpin motif lies at 92 to 115 (YYDYYQPEAYVPTTDTFIEKDSSV). Positions 432–598 (QVDDLLSEIR…ALKRNIKDIM (167 aa)) constitute a Helicase C-terminal domain. Residues 636–671 (EKEITKLEAQMYKHAQDLEFELAAQKRDEIEKLRQQ) form the UVR domain.

It belongs to the UvrB family. In terms of assembly, forms a heterotetramer with UvrA during the search for lesions. Interacts with UvrC in an incision complex.

Its subcellular location is the cytoplasm. The UvrABC repair system catalyzes the recognition and processing of DNA lesions. A damage recognition complex composed of 2 UvrA and 2 UvrB subunits scans DNA for abnormalities. Upon binding of the UvrA(2)B(2) complex to a putative damaged site, the DNA wraps around one UvrB monomer. DNA wrap is dependent on ATP binding by UvrB and probably causes local melting of the DNA helix, facilitating insertion of UvrB beta-hairpin between the DNA strands. Then UvrB probes one DNA strand for the presence of a lesion. If a lesion is found the UvrA subunits dissociate and the UvrB-DNA preincision complex is formed. This complex is subsequently bound by UvrC and the second UvrB is released. If no lesion is found, the DNA wraps around the other UvrB subunit that will check the other stand for damage. The chain is UvrABC system protein B from Vibrio vulnificus (strain CMCP6).